A 290-amino-acid polypeptide reads, in one-letter code: Bifunctional protein FolD (290 aa).

NADP(+) is bound by residues 169–171, I194, and I235; that span reads GAS.

The protein belongs to the tetrahydrofolate dehydrogenase/cyclohydrolase family. Homodimer.

The catalysed reaction is (6R)-5,10-methylene-5,6,7,8-tetrahydrofolate + NADP(+) = (6R)-5,10-methenyltetrahydrofolate + NADPH. It catalyses the reaction (6R)-5,10-methenyltetrahydrofolate + H2O = (6R)-10-formyltetrahydrofolate + H(+). Its pathway is one-carbon metabolism; tetrahydrofolate interconversion. Catalyzes the oxidation of 5,10-methylenetetrahydrofolate to 5,10-methenyltetrahydrofolate and then the hydrolysis of 5,10-methenyltetrahydrofolate to 10-formyltetrahydrofolate. The chain is Bifunctional protein FolD from Helicobacter pylori (strain J99 / ATCC 700824) (Campylobacter pylori J99).